An 835-amino-acid chain; its full sequence is uncharacterized protein (835 aa).

Disordered regions lie at residues 1–38 (MKTSRLSTVPTSSSSTSTSSSPSSSSGSGSSTNTVGSR), 317–477 (DFDL…QSGR), 489–668 (SLSK…IKRR), 721–750 (DLENNNNNNSNSNSNSNSNNNSKRSSVSSF), and 810–835 (QEQQEGEQQEERQQEQILDEDDELMF). 3 stretches are compositionally biased toward low complexity: residues 7–37 (STVPTSSSSTSTSSSPSSSSGSGSSTNTVGS), 328–351 (NNNNNNDNNNNNNTSTTRSKTPTT), and 361–395 (SSTNTTPTTTTTTTTTTTPNKTQSSSSTSLRSGSS). Polar residues-rich tracts occupy residues 396–406 (IGNRTEVSSSI) and 415–424 (IIRSKSSLGT). A compositionally biased stretch (gly residues) spans 432–442 (GGSGGGGGGGM). Positions 449 to 477 (PISKTPTTMITKTASSSSPNLATSTQSGR) are enriched in polar residues. The segment covering 489-510 (SLSKQSSSSNLTRSLPPIIKSP) has biased composition (low complexity). The segment covering 511-521 (ISPPGPTPPAP) has biased composition (pro residues). Over residues 522–629 (TLTKSKSTPS…STTSSATKKS (108 aa)) the composition is skewed to low complexity. Over residues 631–640 (ITKTNPTDEQ) the composition is skewed to polar residues. Composition is skewed to low complexity over residues 641-664 (TTTPKSITKTTTTTTTANSTSTSS) and 724-750 (NNNNNNSNSNSNSNSNNNSKRSSVSSF). The segment covering 826-835 (ILDEDDELMF) has biased composition (acidic residues).

This is an uncharacterized protein from Dictyostelium discoideum (Social amoeba).